We begin with the raw amino-acid sequence, 1979 residues long: Repetitive organellar protein (1979 aa).

Residues 1–12 are compositionally biased toward basic residues; sequence MVFTFKNKKKKK. Disordered regions lie at residues 1–42 and 54–116; these read MVFT…DSWY and TKYK…NNYS. Composition is skewed to basic and acidic residues over residues 13–24 and 31–42; these read EASSDKVSKESF and NNEKREKSDSWY. Residues 68–114 show a composition bias toward low complexity; it reads EDIINNNNNNNNDNNNDNNNDNNNDNNNDNNNDNNNENNNDNNNFNN. Coiled coils occupy residues 127–366, 412–666, 693–876, 992–1094, 1126–1307, and 1398–1467; these read DNEL…LKDE, LKVY…EMEL, LKES…KKKQ, KKKH…YKTI, VDKI…MNIK, and IANY…LTSQ.

It localises to the host cell membrane. The polypeptide is Repetitive organellar protein (Plasmodium falciparum (isolate 3D7)).